A 367-amino-acid polypeptide reads, in one-letter code: MESDSEMVPFPQLPMPIENNYRACTIPYRFPSDDPKKATPNEISWINVFANSIPSFKKRAESDITVPDAPARAEKFAERYAGILEDLKKDPESHGGPPDGILLCRLREQVLRELGFRDIFKKVKDEENAKAISLFPQVVSLSDAIEDDGKRLENLVRGIFAGNIFDLGSAQLAEVFSRDGMSFLASCQNLVPRPWVIDDLENFQAKWINKSWKKAVIFVDNSGADIILGILPFARELLRRGAQVVLAANELPSINDITCTELTEILSQLKDENGQLLGVDTSKLLIANSGNDLPVIDLSRVSQELAYLSSDADLVIVEGMGRGIETNLYAQFKCDSLKIGMVKHLEVAEFLGGRLYDCVFKFNEVQS.

Met-1 is modified (N-acetylmethionine). Asp-220, Asn-221, and Asp-256 together coordinate Mn(2+). The Subfamily II EGMGR motif motif lies at 318–322 (EGMGR).

The protein belongs to the damage-control phosphatase family. Phosphopantetheine phosphatase II subfamily. Multimer. It depends on Mn(2+) as a cofactor. Requires Ni(2+) as cofactor.

With respect to regulation, activity is strongly promoted by Co(2+), Ni(2+), Mg(2+), Cu(2+) and Mn(2+). Activity is inhibited by EDTA. In terms of biological role, metal-dependent phosphatase with probable damage-control functions. Shows phosphatase activity against several substrates, including sugar phosphates and p-nitrophenyl phosphate(pNPP). Prefers sugar phosphate substrates, including the extremely potent glycating agents ribose-5-phosphate and erythrose-4-phosphate. In Arabidopsis thaliana (Mouse-ear cress), this protein is Damage-control phosphatase At2g17340.